Consider the following 545-residue polypeptide: Chaperonin GroEL (545 aa).

Residues 30-33, K51, 87-91, G415, and D495 contribute to the ATP site; these read TLGP and DGTTT.

It belongs to the chaperonin (HSP60) family. As to quaternary structure, forms a cylinder of 14 subunits composed of two heptameric rings stacked back-to-back. Interacts with the co-chaperonin GroES.

It localises to the cytoplasm. It carries out the reaction ATP + H2O + a folded polypeptide = ADP + phosphate + an unfolded polypeptide.. Its function is as follows. Together with its co-chaperonin GroES, plays an essential role in assisting protein folding. The GroEL-GroES system forms a nano-cage that allows encapsulation of the non-native substrate proteins and provides a physical environment optimized to promote and accelerate protein folding. The protein is Chaperonin GroEL of Shewanella baltica (strain OS185).